The chain runs to 337 residues: Large ribosomal subunit protein uL3 (337 aa).

The tract at residues 1-20 is disordered; it reads MASIHRPKRGSLAFSPRKRA.

Belongs to the universal ribosomal protein uL3 family. Part of the 50S ribosomal subunit. Forms a cluster with proteins L14 and L24e.

One of the primary rRNA binding proteins, it binds directly near the 3'-end of the 23S rRNA, where it nucleates assembly of the 50S subunit. The chain is Large ribosomal subunit protein uL3 from Methanosarcina acetivorans (strain ATCC 35395 / DSM 2834 / JCM 12185 / C2A).